Here is a 377-residue protein sequence, read N- to C-terminus: MFDIELVKKINDWKVSEDGALPICIGCDVGGSGLRVRISSFNDSEKYVDLGHAKAKCTKQLVDVLADLEQKIKQVNDKFVCLGAAIAVAGPIKAGTVILTNWQGEPAVRTLTLKDLPQKIFPKDRSVFLNDLEAGAYGVIAAADKDILEQNFVQLFQDKAPKGPVLANGRTAVLAMGSGLGAALVVRTPLLKNPLVLPTELGHVQIAPNMKEHKNFKQERELIQHISNHYYKGELDPEYEDICSGRGLPLAYQFYHQKKTGELLPVEQIDAGEVAKKAMDGEEDAVDALKAHYIFYLRAAKAIATSLSCESCVLSLDNQVKNHPFVMKIMKELEDEFYEFIRPDWMNGLRVYSQKSILNFNILGTDYMAHAIANKPE.

ATP is bound at residue 27-32 (CDVGGS).

This sequence belongs to the bacterial glucokinase family.

It catalyses the reaction D-glucose + ATP = D-glucose 6-phosphate + ADP + H(+). This Trichomonas vaginalis protein is Probable glucokinase 2 (GK2).